A 420-amino-acid polypeptide reads, in one-letter code: Gamma-glutamyl phosphate reductase (420 aa).

Belongs to the gamma-glutamyl phosphate reductase family.

The protein localises to the cytoplasm. The catalysed reaction is L-glutamate 5-semialdehyde + phosphate + NADP(+) = L-glutamyl 5-phosphate + NADPH + H(+). The protein operates within amino-acid biosynthesis; L-proline biosynthesis; L-glutamate 5-semialdehyde from L-glutamate: step 2/2. In terms of biological role, catalyzes the NADPH-dependent reduction of L-glutamate 5-phosphate into L-glutamate 5-semialdehyde and phosphate. The product spontaneously undergoes cyclization to form 1-pyrroline-5-carboxylate. This chain is Gamma-glutamyl phosphate reductase, found in Neisseria meningitidis serogroup C / serotype 2a (strain ATCC 700532 / DSM 15464 / FAM18).